Here is a 133-residue protein sequence, read N- to C-terminus: Protein PROTON GRADIENT REGULATION 5, chloroplastic (133 aa).

A chloroplast-targeting transit peptide spans 1–60 (MAAASISAIGCNQTLIGTSFYGGWGSSISGEDYQTMLSKTVAPPQQARVSRKAIRAVPMM).

This sequence belongs to the PGR5 family. Interacts with PGRL1A and PGRL1B. Disulfide bonds; Cys-11 and Cys-105 are probably involved in the formation of disulfide bridges with 'Cys-300' and 'Cys-303' of PGRL1A. 'Cys-272' and 'Cys-275' of PGRL1A may also be used to form the disulfide bridges, but in this case the cyclic electron flow is lost.

The protein localises to the plastid. It localises to the chloroplast thylakoid membrane. Functionally, critical for growth under fluctuating-light conditions. Involved in the regulation of the cyclic electron flow (CEF) around Photosystem I. Essential for the reduction of PGRL1A by ferredoxin and for photoprotection. Contributes to maximize photosynthesis efficiency after a long dark adaptation via the regulation of non-photochemical quenching (NPQ); acts independently from DLDG1. Promotes the induction of steady-state proton motive force (pmf) and energy-dependent quenching (qE). In Arabidopsis thaliana (Mouse-ear cress), this protein is Protein PROTON GRADIENT REGULATION 5, chloroplastic.